Consider the following 757-residue polypeptide: Endonuclease MutS2 (757 aa).

Residue 321–328 coordinates ATP; that stretch reads GPNMGGKT. The 76-residue stretch at 681 to 756 folds into the Smr domain; that stretch reads IDIRGMTVEE…GTGVTVVEVK (76 aa).

The protein belongs to the DNA mismatch repair MutS family. MutS2 subfamily. Homodimer. Binds to stalled ribosomes, contacting rRNA. Interacts with MutL.

Its activity is regulated as follows. Nuclease activity is stimulated by interaction with MutL and inhibited in the presence of non-hydrolytic ATP (ADPnP). ATPase activity is stimulated by DNA. Endonuclease that is involved in the suppression of homologous recombination and thus may have a key role in the control of bacterial genetic diversity. Has ATPase activity. Binds to DNA. In terms of biological role, acts as a ribosome collision sensor, splitting the ribosome into its 2 subunits. Detects stalled/collided 70S ribosomes which it binds and splits by an ATP-hydrolysis driven conformational change. Acts upstream of the ribosome quality control system (RQC), a ribosome-associated complex that mediates the extraction of incompletely synthesized nascent chains from stalled ribosomes and their subsequent degradation. Probably generates substrates for RQC. This is Endonuclease MutS2 from Thermotoga maritima (strain ATCC 43589 / DSM 3109 / JCM 10099 / NBRC 100826 / MSB8).